The sequence spans 296 residues: Pantothenate synthetase (296 aa).

30–37 (MGNLHEGH) provides a ligand contact to ATP. H37 serves as the catalytic Proton donor. (R)-pantoate is bound at residue Q61. Beta-alanine is bound at residue Q61. 149–152 (GEKD) contributes to the ATP binding site. Q155 is a binding site for (R)-pantoate. Residues V178 and 186 to 189 (MSSR) contribute to the ATP site.

This sequence belongs to the pantothenate synthetase family. As to quaternary structure, homodimer.

It localises to the cytoplasm. It catalyses the reaction (R)-pantoate + beta-alanine + ATP = (R)-pantothenate + AMP + diphosphate + H(+). It functions in the pathway cofactor biosynthesis; (R)-pantothenate biosynthesis; (R)-pantothenate from (R)-pantoate and beta-alanine: step 1/1. In terms of biological role, catalyzes the condensation of pantoate with beta-alanine in an ATP-dependent reaction via a pantoyl-adenylate intermediate. This is Pantothenate synthetase from Vibrio atlanticus (strain LGP32) (Vibrio splendidus (strain Mel32)).